The primary structure comprises 426 residues: Cell cycle checkpoint control protein RAD9B (426 aa).

Residue Ser359 is modified to Phosphoserine.

It belongs to the rad9 family. As to quaternary structure, interacts with HUS1, HUS1B, RAD1, RAD9A and RAD17. As to expression, expressed in testis and skeletal muscle.

The chain is Cell cycle checkpoint control protein RAD9B (RAD9B) from Homo sapiens (Human).